Consider the following 553-residue polypeptide: Ergothioneine transport permease/ergothioneine binding protein EgtU (553 aa).

The ABC transmembrane type-1 domain occupies Leu57–Val236. 6 helical membrane-spanning segments follow: residues Phe61–Phe81, Phe98–Gly118, Ala122–Leu142, Ile182–Leu202, Val219–Phe239, and Val261–Pro281. The Periplasmic segment spans residues Arg282 to Leu553. The interval Lys288–Glu549 is ergothioneine binding domain.

It in the N-terminal section; belongs to the binding-protein-dependent transport system permease family. The protein in the C-terminal section; belongs to the OsmX family. The complex is composed of two ATP-binding proteins (EgtV) and two transmembrane proteins (EgtU).

It localises to the cell inner membrane. Its function is as follows. Part of the ABC transporter complex EgtUV involved in the uptake of ergothioneine (EGT), a natural low-molecular weight (LMW) thiol antioxidant which protects H.pylori against bleach stress. Responsible for the translocation of the substrate across the membrane. Also contains a C-terminal periplasmic solute-binding domain (SBD) which binds to ergothioneine with low-micromolar affinity. Cannot bind the structurally similar compounds glycine betaine, choline, proline, carnitine or histidine. This is Ergothioneine transport permease/ergothioneine binding protein EgtU from Helicobacter pylori (strain G27).